The sequence spans 430 residues: Histidinol dehydrogenase (430 aa).

Positions 129, 190, and 213 each coordinate NAD(+). Substrate-binding residues include S236, Q258, and H261. Zn(2+) contacts are provided by Q258 and H261. Active-site proton acceptor residues include E326 and H327. Substrate contacts are provided by H327, D360, E414, and H419. D360 serves as a coordination point for Zn(2+). A Zn(2+)-binding site is contributed by H419.

Belongs to the histidinol dehydrogenase family. Zn(2+) serves as cofactor.

It catalyses the reaction L-histidinol + 2 NAD(+) + H2O = L-histidine + 2 NADH + 3 H(+). It participates in amino-acid biosynthesis; L-histidine biosynthesis; L-histidine from 5-phospho-alpha-D-ribose 1-diphosphate: step 9/9. In terms of biological role, catalyzes the sequential NAD-dependent oxidations of L-histidinol to L-histidinaldehyde and then to L-histidine. The chain is Histidinol dehydrogenase from Caldanaerobacter subterraneus subsp. tengcongensis (strain DSM 15242 / JCM 11007 / NBRC 100824 / MB4) (Thermoanaerobacter tengcongensis).